A 490-amino-acid polypeptide reads, in one-letter code: Cytochrome P450 2C55 (490 aa).

Cysteine 435 serves as a coordination point for heme.

It belongs to the cytochrome P450 family. It depends on heme as a cofactor. As to expression, highest level in colon. Low levels in liver and small intestine.

Its subcellular location is the endoplasmic reticulum membrane. It is found in the microsome membrane. The enzyme catalyses an organic molecule + reduced [NADPH--hemoprotein reductase] + O2 = an alcohol + oxidized [NADPH--hemoprotein reductase] + H2O + H(+). Its function is as follows. Metabolizes arachidonic acid mainly to 19-hydroxyeicosatetraenoic acid (HETE). The sequence is that of Cytochrome P450 2C55 from Mus musculus (Mouse).